The primary structure comprises 387 residues: MGIKGLSQLILDEAKDSVKEDQLKNYFGRKVAIDASMAMYQFLIALKNTGMDLTDKDGEVTNHLQGLLARTTKMLEYGIKPCYVFDGKPPQLKSGELEKRKERQKEAMEQFALAQEEGDEEKMVMWNKRTTRMTKEQSNDGKKLLRLMGVPVVEAPGEAEAQCAELCKGGLVYATATEDMDALTYATPVLARHLTFSEARKQPIQEFTFKQVIEGLGVTVDQFIDICILCGCDYTDSIKGIGPKKALAMIKKYGNIENLLKNIEGKHYQAPSEFPYEEVRNIFKNPDVTPSSELVDTMKWTEPDEEGLIEFLVKEKQFDEERVRGYIKRIKSSRGKPTQTRLDGFFTPVASSSTTKKKAPAKKDDKKSATDKKRKAADASTSSKKKK.

Residues 1–104 (MGIKGLSQLI…GELEKRKERQ (104 aa)) form an N-domain region. Asp-34 contacts Mg(2+). Position 70 (Arg-70) interacts with DNA. Residues Asp-86, Glu-158, Glu-160, Asp-179, and Asp-181 each contribute to the Mg(2+) site. The segment at 122-253 (KMVMWNKRTT…KKALAMIKKY (132 aa)) is I-domain. Residue Glu-158 coordinates DNA. DNA contacts are provided by Gly-231 and Asp-233. Asp-233 lines the Mg(2+) pocket. The tract at residues 332 to 387 (SSRGKPTQTRLDGFFTPVASSSTTKKKAPAKKDDKKSATDKKRKAADASTSSKKKK) is disordered. The tract at residues 338 to 346 (TQTRLDGFF) is interaction with PCNA. Positions 361 to 371 (AKKDDKKSATD) are enriched in basic and acidic residues. Positions 378 to 387 (DASTSSKKKK) are enriched in low complexity.

Belongs to the XPG/RAD2 endonuclease family. FEN1 subfamily. As to quaternary structure, interacts with PCNA. Three molecules of FEN1 bind to one PCNA trimer with each molecule binding to one PCNA monomer. PCNA stimulates the nuclease activity without altering cleavage specificity. Mg(2+) serves as cofactor. Phosphorylated. Phosphorylation upon DNA damage induces relocalization to the nuclear plasma.

Its subcellular location is the nucleus. The protein resides in the nucleolus. It localises to the nucleoplasm. It is found in the mitochondrion. Functionally, structure-specific nuclease with 5'-flap endonuclease and 5'-3' exonuclease activities involved in DNA replication and repair. During DNA replication, cleaves the 5'-overhanging flap structure that is generated by displacement synthesis when DNA polymerase encounters the 5'-end of a downstream Okazaki fragment. It enters the flap from the 5'-end and then tracks to cleave the flap base, leaving a nick for ligation. Also involved in the long patch base excision repair (LP-BER) pathway, by cleaving within the apurinic/apyrimidinic (AP) site-terminated flap. Acts as a genome stabilization factor that prevents flaps from equilibrating into structures that lead to duplications and deletions. Also possesses 5'-3' exonuclease activity on nicked or gapped double-stranded DNA, and exhibits RNase H activity. Also involved in replication and repair of rDNA and in repairing mitochondrial DNA. The protein is Flap endonuclease 1 of Naegleria gruberi (Amoeba).